A 367-amino-acid polypeptide reads, in one-letter code: Methylthioribose-1-phosphate isomerase (367 aa).

Substrate-binding positions include 48-50, R91, and Q215; that span reads RGA. D256 acts as the Proton donor in catalysis. 266-267 is a binding site for substrate; that stretch reads NK.

The protein belongs to the eIF-2B alpha/beta/delta subunits family. MtnA subfamily.

It carries out the reaction 5-(methylsulfanyl)-alpha-D-ribose 1-phosphate = 5-(methylsulfanyl)-D-ribulose 1-phosphate. Its pathway is amino-acid biosynthesis; L-methionine biosynthesis via salvage pathway; L-methionine from S-methyl-5-thio-alpha-D-ribose 1-phosphate: step 1/6. Its function is as follows. Catalyzes the interconversion of methylthioribose-1-phosphate (MTR-1-P) into methylthioribulose-1-phosphate (MTRu-1-P). The polypeptide is Methylthioribose-1-phosphate isomerase (Syntrophus aciditrophicus (strain SB)).